A 183-amino-acid polypeptide reads, in one-letter code: MSQYSGKIVFFEGKCFTGRRLEVFGDCDNFQDRGFMNRVNSIRVESGAWVCFDHPDFKGQQYMLEKGEYPDFQRWNGHNDHMGSCKPIKMHGEQYRMELFEGQNFTGQCVELCDDCPFLQSTGFSKNCLNSIKVYGDGAWAMYEEPNYRGRMYIVERGNYCAFTEWQSENPNIQSIRRVVNYF.

Beta/gamma crystallin 'Greek key' domains follow at residues 6-46 (GKIV…RVES), 47-89 (GAWV…KPIK), 95-136 (YRME…KVYG), and 138-180 (GAWA…RRVV).

This sequence belongs to the beta/gamma-crystallin family. In terms of assembly, monomer.

Functionally, crystallins are the dominant structural components of the vertebrate eye lens. The polypeptide is Gamma-crystallin N-A (crygna) (Danio rerio (Zebrafish)).